A 239-amino-acid polypeptide reads, in one-letter code: Probable 2-phosphosulfolactate phosphatase (239 aa).

The protein belongs to the ComB family. Mg(2+) is required as a cofactor.

The catalysed reaction is (2R)-O-phospho-3-sulfolactate + H2O = (2R)-3-sulfolactate + phosphate. This chain is Probable 2-phosphosulfolactate phosphatase, found in Clostridium botulinum (strain Okra / Type B1).